The following is a 932-amino-acid chain: Protocadherin gamma-A7 (932 aa).

Positions 1-28 (MAAQPRGGDYRGFFLLSILLGTPWEAWA) are cleaved as a signal peptide. 6 consecutive Cadherin domains span residues 29–133 (GRIL…VPRF), 134–242 (LTEE…TPVF), 243–347 (SLPQ…APEV), 348–452 (TMTS…PPTF), 453–562 (PHSS…PPEI), and 570–682 (DGST…EPSD). Topologically, residues 29 to 692 (GRILYSVSEE…GPYNYDLTLY (664 aa)) are extracellular. N-linked (GlcNAc...) asparagine glycosylation is found at Asn-419 and Asn-545. A helical transmembrane segment spans residues 693 to 713 (LVVAVATVSCVFLAFVLVLLA). Residues 714-932 (LRLRRWHKSR…KKKSGKKEKK (219 aa)) are Cytoplasmic-facing. Disordered regions lie at residues 805-841 (PSIQ…WPNN) and 902-932 (ATLT…KEKK). The span at 922 to 932 (NKKKSGKKEKK) shows a compositional bias: basic residues.

The protein localises to the cell membrane. In terms of biological role, potential calcium-dependent cell-adhesion protein. May be involved in the establishment and maintenance of specific neuronal connections in the brain. This is Protocadherin gamma-A7 (PCDHGA7) from Homo sapiens (Human).